Consider the following 382-residue polypeptide: Pentatricopeptide repeat-containing protein 2, mitochondrial (382 aa).

The stretch at 159 to 193 is one PPR repeat; sequence TSFNILMDMLFTKGQYERAVEVLVEMRNQRVRFSK.

This sequence belongs to the PTCD2 family.

The protein resides in the mitochondrion. Functionally, may be involved in mitochondrial RNA maturation and mitochondrial respiratory chain function. The chain is Pentatricopeptide repeat-containing protein 2, mitochondrial (ptcd2) from Xenopus laevis (African clawed frog).